A 613-amino-acid polypeptide reads, in one-letter code: Phosphomethylpyrimidine synthase (613 aa).

Residues Asn215, Met244, Tyr273, His309, 329-331 (SRG), 370-373 (DGLR), and Glu409 contribute to the substrate site. Position 413 (His413) interacts with Zn(2+). Tyr436 contributes to the substrate binding site. His477 lines the Zn(2+) pocket. Cys557, Cys560, and Cys565 together coordinate [4Fe-4S] cluster.

Belongs to the ThiC family. In terms of assembly, homodimer. Requires [4Fe-4S] cluster as cofactor.

The enzyme catalyses 5-amino-1-(5-phospho-beta-D-ribosyl)imidazole + S-adenosyl-L-methionine = 4-amino-2-methyl-5-(phosphooxymethyl)pyrimidine + CO + 5'-deoxyadenosine + formate + L-methionine + 3 H(+). It participates in cofactor biosynthesis; thiamine diphosphate biosynthesis. In terms of biological role, catalyzes the synthesis of the hydroxymethylpyrimidine phosphate (HMP-P) moiety of thiamine from aminoimidazole ribotide (AIR) in a radical S-adenosyl-L-methionine (SAM)-dependent reaction. The chain is Phosphomethylpyrimidine synthase from Paramagnetospirillum magneticum (strain ATCC 700264 / AMB-1) (Magnetospirillum magneticum).